The sequence spans 89 residues: Small ribosomal subunit protein uS15 (89 aa).

The protein belongs to the universal ribosomal protein uS15 family. Part of the 30S ribosomal subunit. Forms a bridge to the 50S subunit in the 70S ribosome, contacting the 23S rRNA.

Its function is as follows. One of the primary rRNA binding proteins, it binds directly to 16S rRNA where it helps nucleate assembly of the platform of the 30S subunit by binding and bridging several RNA helices of the 16S rRNA. In terms of biological role, forms an intersubunit bridge (bridge B4) with the 23S rRNA of the 50S subunit in the ribosome. The polypeptide is Small ribosomal subunit protein uS15 (Pectobacterium carotovorum subsp. carotovorum (strain PC1)).